A 288-amino-acid chain; its full sequence is Programmed cell death protein 1 (288 aa).

An N-terminal signal peptide occupies residues 1–24 (MWVRQVPWSFTWAVLQLSWQSGWL). Topologically, residues 25–169 (LEVPNGPWRS…PKPEGRFQGM (145 aa)) are extracellular. One can recognise an Ig-like V-type domain in the interval 31–139 (PWRSLTFYPA…PKAKIEESPG (109 aa)). 4 N-linked (GlcNAc...) asparagine glycosylation sites follow: N49, N58, N74, and N116. C54 and C123 are joined by a disulfide. Residues 70 to 77 (LSPSNQTE) are interaction with CD274/PDCD1L1. The helical transmembrane segment at 170–190 (VIGIMSALVGIPVLLLLAWAL) threads the bilayer. At 191–288 (AVFCSTSMSE…HEDGHCSWPL (98 aa)) the chain is on the cytoplasmic side. Positions 223–228 (VAYEEL) match the ITIM motif motif. Y225 bears the Phosphotyrosine mark. A Glycyl lysine isopeptide (Lys-Gly) (interchain with G-Cter in ubiquitin) cross-link involves residue K235. T236 carries the phosphothreonine; by MAPK3 modification. The ITSM motif motif lies at 247-251 (EYATI). Residue Y248 is modified to Phosphotyrosine. Residues 263–288 (GRRGSADGLQGPRPPRHEDGHCSWPL) form a disordered region. Positions 277–288 (PRHEDGHCSWPL) are enriched in basic and acidic residues.

As to quaternary structure, monomer. Interacts with CD274/PDCD1L1. Interacts with CD273/PDCD1LG2. Interacts with FBXO38; leading to ubiquitination and degradation by the proteasome. In terms of processing, ubiquitinated at Lys-235 by the SCF(FBXO38) complex, leading to its proteasomal degradation. Ubiquitinated via 'Lys-48'-linked polyubiquitin chains. Deubiquitinated and thus stabilized by USP5. Tyrosine phosphorylated at Tyr-225 (within ITIM motif) and Tyr-248 (ITSM motif) upon ligand binding. Phosphorylation at Tyr-248 promotes the recruitment of the protein tyrosine phosphatase PTPN11/SHP-2 that mediates dephosphorylation of key TCR proximal signaling molecules, such as ZAP70, PRKCQ/PKCtheta and CD247/CD3zeta. Phosphorylation at Thr-236 promotes the recruitment of the deubiquitinase USP5. Thymus-specific.

Its subcellular location is the cell membrane. Functionally, inhibitory receptor on antigen activated T-cells that plays a critical role in induction and maintenance of immune tolerance to self. Delivers inhibitory signals upon binding to ligands, such as CD274/PDCD1L1 and CD273/PDCD1LG2. Following T-cell receptor (TCR) engagement, PDCD1 associates with CD3-TCR in the immunological synapse and directly inhibits T-cell activation. Suppresses T-cell activation through the recruitment of PTPN11/SHP-2: following ligand-binding, PDCD1 is phosphorylated within the ITSM motif, leading to the recruitment of the protein tyrosine phosphatase PTPN11/SHP-2 that mediates dephosphorylation of key TCR proximal signaling molecules, such as ZAP70, PRKCQ/PKCtheta and CD247/CD3zeta. The PDCD1-mediated inhibitory pathway is exploited by tumors to attenuate anti-tumor immunity and facilitate tumor survival. This is Programmed cell death protein 1 from Mus musculus (Mouse).